A 570-amino-acid polypeptide reads, in one-letter code: Hydroxylamine reductase (570 aa).

[4Fe-4S] cluster contacts are provided by C5, C8, C17, and C23. Hybrid [4Fe-2O-2S] cluster is bound by residues H266, E290, C334, C425, C453, C478, E513, and K515. Cysteine persulfide is present on C425.

This sequence belongs to the HCP family. Requires [4Fe-4S] cluster as cofactor. It depends on hybrid [4Fe-2O-2S] cluster as a cofactor.

The protein resides in the cytoplasm. It catalyses the reaction A + NH4(+) + H2O = hydroxylamine + AH2 + H(+). Functionally, catalyzes the reduction of hydroxylamine to form NH(3) and H(2)O. The sequence is that of Hydroxylamine reductase from Clostridium botulinum (strain ATCC 19397 / Type A).